Here is a 446-residue protein sequence, read N- to C-terminus: uncharacterized protein (446 aa).

4 helical membrane passes run 69–89 (FWLWVVAATFAFFTGFSVTYL), 98–118 (FFLVLAGVLGMNTLMLAVWLA), 169–189 (HSLWLCTLLGMLVSVLLLLLV), and 247–267 (GLLVGSIACYGILPRLLAWVV).

It localises to the membrane. This is an uncharacterized protein from Neisseria meningitidis serogroup B (strain ATCC BAA-335 / MC58).